Reading from the N-terminus, the 313-residue chain is Porphobilinogen deaminase (313 aa).

Cysteine 242 carries the S-(dipyrrolylmethanemethyl)cysteine modification.

The protein belongs to the HMBS family. As to quaternary structure, monomer. Requires dipyrromethane as cofactor.

It carries out the reaction 4 porphobilinogen + H2O = hydroxymethylbilane + 4 NH4(+). The protein operates within porphyrin-containing compound metabolism; protoporphyrin-IX biosynthesis; coproporphyrinogen-III from 5-aminolevulinate: step 2/4. Tetrapolymerization of the monopyrrole PBG into the hydroxymethylbilane pre-uroporphyrinogen in several discrete steps. This chain is Porphobilinogen deaminase, found in Klebsiella pneumoniae (strain 342).